Here is a 276-residue protein sequence, read N- to C-terminus: Protein TabB (276 aa).

It belongs to the transferase hexapeptide repeat family. Pyridoxal 5'-phosphate is required as a cofactor.

This Pseudomonas amygdali pv. tabaci (Pseudomonas syringae pv. tabaci) protein is Protein TabB (tabB).